We begin with the raw amino-acid sequence, 2528 residues long: Reducing polyketide synthase PKS1 (2528 aa).

The region spanning 11-436 (ITPIAVVGMS…GANVHAILES (426 aa)) is the Ketosynthase family 3 (KS3) domain. Residues cysteine 186, histidine 321, and histidine 359 each act as for beta-ketoacyl synthase activity in the active site. The tract at residues 573 to 868 (FVFTGQGAQW…LGGPISQVID (296 aa)) is malonyl-CoA:ACP transacylase (MAT). The interval 954–1092 (LDLIGVFDVH…GLISVLKSSK (139 aa)) is N-terminal hotdog fold. The 325-residue stretch at 954-1278 (LDLIGVFDVH…LVALDRPNSS (325 aa)) folds into the PKS/mFAS DH domain. Residues 956-1277 (LIGVFDVHSS…TLVALDRPNS (322 aa)) are dehydratase (DH) domain. The active-site Proton acceptor; for dehydratase activity is histidine 986. Residues 1122–1278 (KTEWDVKDMY…LVALDRPNSS (157 aa)) form a C-terminal hotdog fold region. The Proton donor; for dehydratase activity role is filled by aspartate 1187. The segment at 1827–2139 (GLLDSLHFTV…TGRHMGKMVA (313 aa)) is enoyl reductase (ER) domain. Positions 2164–2341 (ASYLLVGGVG…ATVIDIGAVH (178 aa)) are ketoreductase (KR) domain. The 78-residue stretch at 2442 to 2519 (SAVTIVLSAL…ALAVKIAARS (78 aa)) folds into the Carrier domain. Residue serine 2479 is modified to O-(pantetheine 4'-phosphoryl)serine.

Its pathway is mycotoxin biosynthesis. Reducing polyketide synthase (PKS); part of the Tox1A locus, one of the 2 loci that mediate the biosynthesis of T-toxin, a family of linear polyketides 37 to 45 carbons in length, of which the major component is 41 carbons, and which leads to high virulence to maize. One of the PKSs (PKS1 or PKS2) could synthesize a precursor, used subsequently by the other PKS as starter unit, to add additional carbons. Variability in the length of the final carbon backbone C35-47 could be achieved by varying the number of condensation cycles, or use of different starter or extender units or might be due to decarboxylation of the penultimate product, catalyzed by DEC1. Additional proteins are required for the biosynthesis of T-toxin, including oxidoreductases RED1, RED2, RED3, LAM1 and OXI1, as well as esterase TOX9. This chain is Reducing polyketide synthase PKS1, found in Cochliobolus heterostrophus (strain C4 / ATCC 48331 / race T) (Southern corn leaf blight fungus).